The following is a 321-amino-acid chain: WD repeat-containing protein VIP3 (321 aa).

WD repeat units lie at residues 12 to 55 (AHED…LVRT), 58 to 97 (GHSLGVAALAAHPSGIIAASSSIDSFVRVFDVDTNATIAV), 100 to 140 (APPS…LIST), 156 to 195 (SSKKFVLSVAWSPNGKRLACGSMDGTICVFDVDRSKLLHQ), 198 to 238 (GHNM…LLGS), 241 to 280 (GHTSWVLSVDASPDGGAIATGSSDRTVRLWDLKMRAAIQT), and 283 to 319 (NHNDQVWSVAFRPPGGTGVRAGRLASVSDDKSVSLYD).

Component of the nuclear PAF1 complex (PAF1C), which consists of VIP2/ELF7/PAF1, VIP3/SKI8/WDR61, VIP4/LEO1, VIP5/RTF1, VIP6/ELF8/CTR9 and CDC73. Component of the cytoplasmic SKI complex, which consists of SKI2, SKI3 and VIP3/SKI8. Interacts with VIP4 and VIP6.

It is found in the nucleus. The protein resides in the cytoplasm. Its function is as follows. Component of the PAF1 complex (PAF1C) which is involved in histone modifications such as methylation on histone H3 'Lys-4' (H3K4me3). Involved in regulation of flowering time. Required for the expression of the flowering repressor and MADS box gene FLC. Required for histone H3 trimethylation on 'Lys-4' (H3K4me3) and histone dimethylation on 'Lys-36' (H3K36me2) at the FLC locus. Prevents trimethylation on 'Lys-27' (H3K27me3) at the same locus. Not required for meiotic recombination or progression. Component of the SKI complex which is thought to be involved in exosome-mediated RNA decay and associates with transcriptionally active genes in a manner dependent on PAF1 complex (PAF1C). Required for proper progression of cell differentiation process. This is WD repeat-containing protein VIP3 from Arabidopsis thaliana (Mouse-ear cress).